Consider the following 328-residue polypeptide: tRNA U34 carboxymethyltransferase (328 aa).

Residues Lys-91, Trp-105, Lys-110, Gly-130, 181 to 182 (IE), Met-196, Tyr-200, and Arg-315 contribute to the carboxy-S-adenosyl-L-methionine site.

It belongs to the class I-like SAM-binding methyltransferase superfamily. CmoB family. Homotetramer.

It carries out the reaction carboxy-S-adenosyl-L-methionine + 5-hydroxyuridine(34) in tRNA = 5-carboxymethoxyuridine(34) in tRNA + S-adenosyl-L-homocysteine + H(+). In terms of biological role, catalyzes carboxymethyl transfer from carboxy-S-adenosyl-L-methionine (Cx-SAM) to 5-hydroxyuridine (ho5U) to form 5-carboxymethoxyuridine (cmo5U) at position 34 in tRNAs. This is tRNA U34 carboxymethyltransferase from Pectobacterium carotovorum subsp. carotovorum (strain PC1).